A 1320-amino-acid chain; its full sequence is FERM and PDZ domain-containing protein 4 (1320 aa).

Positions 33 to 66 (QVPPYGWEMMTNRDGRDYFINHMTQAIPFDDPRF) constitute a WW domain. The PDZ domain occupies 78-155 (KVEMRRDPVL…SILLTVIQPY (78 aa)). In terms of domain architecture, FERM spans 204–519 (NVLKVYLENG…GYYRLLVDSR (316 aa)). Disordered stretches follow at residues 809 to 847 (APPPGFRDSSDEEDTQSQATSFHEDKEQGSSLQNEEIPV), 897 to 927 (YSPESSSDSGNETNSSEMTEGSELAAAQKQS), 949 to 981 (TEFPTSKAPSVGLPPKSSHGLAARPATDLPPKV), 1024 to 1050 (KRKSKLPEGEGKSPLSGNIPGKKQQGT), 1114 to 1139 (PRGPGLGNREAEGKEDGTVEGGADDA), and 1204 to 1274 (GHFS…ATFE). The span at 900-913 (ESSSDSGNETNSSE) shows a compositional bias: low complexity. Residues 1204–1217 (GHFSLQSSQGSSVD) show a composition bias toward polar residues. A compositionally biased stretch (low complexity) spans 1223–1232 (GSSSSACATP).

As to quaternary structure, interacts (via C-terminus) with DLG1, DLG2, DLG3 and DLG4/PSD95. Interacts (via N-terminus) with ARHGEF7; the interaction is mediated by the PDZ domain. Interacts with GPSM2 (via TPR repeat region). As to expression, expressed in various regions of the brain, including cortex, hippocampus, cerebellum, olfactory bulb and medial habenular nucleus.

The protein resides in the cell projection. Its subcellular location is the dendritic spine. Positive regulator of dendritic spine morphogenesis and density. Required for the maintenance of excitatory synaptic transmission. Binds phosphatidylinositol 4,5-bisphosphate. In Mus musculus (Mouse), this protein is FERM and PDZ domain-containing protein 4 (Frmpd4).